Consider the following 485-residue polypeptide: Glutamyl-tRNA(Gln) amidotransferase subunit A (485 aa).

Catalysis depends on charge relay system residues Lys76 and Ser152. Ser176 acts as the Acyl-ester intermediate in catalysis.

The protein belongs to the amidase family. GatA subfamily. In terms of assembly, heterotrimer of A, B and C subunits.

The catalysed reaction is L-glutamyl-tRNA(Gln) + L-glutamine + ATP + H2O = L-glutaminyl-tRNA(Gln) + L-glutamate + ADP + phosphate + H(+). Its function is as follows. Allows the formation of correctly charged Gln-tRNA(Gln) through the transamidation of misacylated Glu-tRNA(Gln) in organisms which lack glutaminyl-tRNA synthetase. The reaction takes place in the presence of glutamine and ATP through an activated gamma-phospho-Glu-tRNA(Gln). The polypeptide is Glutamyl-tRNA(Gln) amidotransferase subunit A (Dechloromonas aromatica (strain RCB)).